We begin with the raw amino-acid sequence, 321 residues long: ATP-dependent 6-phosphofructokinase (321 aa).

Gly11 contributes to the ATP binding site. Arg21–Arg25 contacts ADP. Residues Arg72–Cys73 and Gly102–Ser105 each bind ATP. Mg(2+) is bound at residue Asp103. Thr126–Asp128 is a substrate binding site. Catalysis depends on Asp128, which acts as the Proton acceptor. An ADP-binding site is contributed by Arg155. Substrate-binding positions include Arg163 and Met170 to Arg172. ADP-binding positions include Gly186–Glu188, Arg212, and Lys214–His216. Residues Glu223, Arg245, and His251 to Arg254 contribute to the substrate site.

This sequence belongs to the phosphofructokinase type A (PFKA) family. ATP-dependent PFK group I subfamily. Prokaryotic clade 'B1' sub-subfamily. In terms of assembly, homotetramer. The cofactor is Mg(2+).

The protein localises to the cytoplasm. The enzyme catalyses beta-D-fructose 6-phosphate + ATP = beta-D-fructose 1,6-bisphosphate + ADP + H(+). It participates in carbohydrate degradation; glycolysis; D-glyceraldehyde 3-phosphate and glycerone phosphate from D-glucose: step 3/4. Allosterically activated by ADP and other diphosphonucleosides, and allosterically inhibited by phosphoenolpyruvate. Catalyzes the phosphorylation of D-fructose 6-phosphate to fructose 1,6-bisphosphate by ATP, the first committing step of glycolysis. This chain is ATP-dependent 6-phosphofructokinase, found in Thermoanaerobacter pseudethanolicus (strain ATCC 33223 / 39E) (Clostridium thermohydrosulfuricum).